Consider the following 194-residue polypeptide: MELEVFAGQEKSELSMIEVARAILEERGRDKEMYFSDLVNAIQVYLEKSDADIREALPFFYSDLNTDGSFIPLGENKWGLRSWYGIDEIDEEIVTLEEDEDGAPKHKRKRVNAFMDGDEDAIDYSDDDPEDESFNTAEEDTEYDEEDPDDEKSEVESYDSEINEIIPDEDLDENVDLDEEDDDYSDDEEDEEGE.

The HTH HARE-type domain occupies 14–83; the sequence is LSMIEVARAI…GENKWGLRSW (70 aa). Positions 117–194 are disordered; the sequence is GDEDAIDYSD…SDDEEDEEGE (78 aa).

It belongs to the RpoE family. RNAP is composed of a core of 2 alpha, a beta and a beta' subunits. The core is associated with a delta subunit and one of several sigma factors.

Participates in both the initiation and recycling phases of transcription. In the presence of the delta subunit, RNAP displays an increased specificity of transcription, a decreased affinity for nucleic acids, and an increased efficiency of RNA synthesis because of enhanced recycling. The protein is Probable DNA-directed RNA polymerase subunit delta of Streptococcus mutans serotype c (strain ATCC 700610 / UA159).